We begin with the raw amino-acid sequence, 555 residues long: MFCYQCEQTDRTGARPGCASAKGNCGKDATTADLQDLLVHAVKGIAQYGAIARAMGAPDRDADRFVLYAMFTTLTNVNFHAARFVALLREAAQMRDRVKAACDASARAAGTVVPAQHGPAMWQPADDLAGLLEQAARVGVDNGLDKVGADIVGLRALVLYGLKGVCAYAHHARVLGYERDDIYEGIEAALAFLARDPDDVNALLTQALGLGRLNLTVMELLDSANTGRFGAQQPTAVRVSPVAGKAILVSGHDLGDLHALLEQTAGTGIHVYTHGEMLPAHAYPVLKAFPHLVGNYGGAWQDQQSDFAHFPGPILMTSNCIIEPMPQYRQRIFTTGPVGWPGVRHLEHHDFSTLIRAAQALPGFPATAAEETITVGFGRHAVLGVADKVIDAVKAGQIRHFFLIGGCDGAAPGRNYYTEFAEQAPDDTVVMTLGCNKYRFNRHAFGDIGGIPRLLDVGQCNDSYSAIRIATALADAFECGVNDLPLSLVISWFEQKAAAVLLTLLALGLRNIRLGPTLPAFVTPGVLAVLVEQFGIQPIGDAGTDLAASLARHAA.

Positions 3, 6, 18, and 25 each coordinate [4Fe-4S] cluster. Positions 252, 276, 320, 407, 435, 460, 494, and 496 each coordinate hybrid [4Fe-2O-2S] cluster. Cys407 carries the cysteine persulfide modification.

The protein belongs to the HCP family. [4Fe-4S] cluster serves as cofactor. Requires hybrid [4Fe-2O-2S] cluster as cofactor.

The protein resides in the cytoplasm. The enzyme catalyses A + NH4(+) + H2O = hydroxylamine + AH2 + H(+). Functionally, catalyzes the reduction of hydroxylamine to form NH(3) and H(2)O. The chain is Hydroxylamine reductase from Burkholderia lata (strain ATCC 17760 / DSM 23089 / LMG 22485 / NCIMB 9086 / R18194 / 383).